A 180-amino-acid chain; its full sequence is Pro-glucagon (180 aa).

The first 20 residues, 1-20, serve as a signal peptide directing secretion; sequence MKSLYFVAGLFVMLVQGSWQ. Positions 25–35 are enriched in polar residues; the sequence is NTEEKSSSFPA. The tract at residues 25–59 is disordered; sequence NTEEKSSSFPAPQTDPLGDPDQINEDKRHSQGTFT. Residue Ser-54 is modified to Phosphoserine. Residues 84 to 89 constitute a propeptide that is removed on maturation; sequence NKNNIA. A phosphoserine mark is found at Ser-105 and Ser-108. Arg-127 bears the Arginine amide mark. Residues 131–145 constitute a propeptide that is removed on maturation; the sequence is DFPEEVNIVEELRRR. Residues Ser-150 and Ser-152 each carry the phosphoserine modification.

Belongs to the glucagon family. Proglucagon is post-translationally processed in a tissue-specific manner in pancreatic A cells and intestinal L cells. In pancreatic A cells, the major bioactive hormone is glucagon cleaved by PCSK2/PC2. In the intestinal L cells PCSK1/PC1 liberates GLP-1, GLP-2, glicentin and oxyntomodulin. GLP-1 is further N-terminally truncated by post-translational processing in the intestinal L cells resulting in GLP-1(7-37) GLP-1-(7-36)amide. The C-terminal amidation is neither important for the metabolism of GLP-1 nor for its effects on the endocrine pancreas. As to expression, glucagon is secreted in the A cells of the islets of Langerhans. GLP-1, GLP-2, oxyntomodulin and glicentin are secreted from enteroendocrine cells throughout the gastrointestinal tract.

It localises to the secreted. Its function is as follows. Plays a key role in glucose metabolism and homeostasis. Regulates blood glucose by increasing gluconeogenesis and decreasing glycolysis. A counterregulatory hormone of insulin, raises plasma glucose levels in response to insulin-induced hypoglycemia. Plays an important role in initiating and maintaining hyperglycemic conditions in diabetes. Potent stimulator of glucose-dependent insulin release. Also stimulates insulin release in response to IL6. Plays important roles on gastric motility and the suppression of plasma glucagon levels. May be involved in the suppression of satiety and stimulation of glucose disposal in peripheral tissues, independent of the actions of insulin. Has growth-promoting activities on intestinal epithelium. May also regulate the hypothalamic pituitary axis (HPA) via effects on LH, TSH, CRH, oxytocin, and vasopressin secretion. Increases islet mass through stimulation of islet neogenesis and pancreatic beta cell proliferation. Inhibits beta cell apoptosis. In terms of biological role, stimulates intestinal growth and up-regulates villus height in the small intestine, concomitant with increased crypt cell proliferation and decreased enterocyte apoptosis. The gastrointestinal tract, from the stomach to the colon is the principal target for GLP-2 action. Plays a key role in nutrient homeostasis, enhancing nutrient assimilation through enhanced gastrointestinal function, as well as increasing nutrient disposal. Stimulates intestinal glucose transport and decreases mucosal permeability. Functionally, significantly reduces food intake. Inhibits gastric emptying in humans. Suppression of gastric emptying may lead to increased gastric distension, which may contribute to satiety by causing a sensation of fullness. Its function is as follows. May modulate gastric acid secretion and the gastro-pyloro-duodenal activity. May play an important role in intestinal mucosal growth in the early period of life. This Bos taurus (Bovine) protein is Pro-glucagon (GCG).